The chain runs to 151 residues: Large ribosomal subunit protein uL15 (151 aa).

The disordered stretch occupies residues 1–51; sequence MPLKIEDLKPTPGSRKPKKRLGRGIGSGLGKTAGKGHKGEKARGRGKIGRT. The span at 23–33 shows a compositional bias: gly residues; it reads RGIGSGLGKTA.

The protein belongs to the universal ribosomal protein uL15 family. As to quaternary structure, part of the 50S ribosomal subunit.

Binds to the 23S rRNA. This is Large ribosomal subunit protein uL15 from Petrotoga mobilis (strain DSM 10674 / SJ95).